A 397-amino-acid polypeptide reads, in one-letter code: Lysophospholipid transporter LplT (397 aa).

Residues 1–17 (MSESVHTNTSLWSKGMK) are Periplasmic-facing. A helical membrane pass occupies residues 18-38 (AVIVAQFLSAFGDNALLFATL). Topologically, residues 39-52 (ALLKAQFYPEWSQP) are cytoplasmic. Residues 53–73 (ILQMVFVGAYILFAPFVGQVA) form a helical membrane-spanning segment. The Periplasmic segment spans residues 74 to 90 (DSFAKGRVMMFANGLKL). Residues 91 to 111 (LGAASICFGINPFLGYTLVGV) form a helical membrane-spanning segment. At 112–144 (GAAAYSPAKYGILGELTTGSKLVKANGLMEAST) the chain is on the cytoplasmic side. Residues 145 to 165 (IAAILLGSVAGGVLADWHVLV) traverse the membrane as a helical segment. Alanine 166 is a topological domain (periplasmic). The helical transmembrane segment at 167–187 (LAACALAYGGAVVANIYIPKL) threads the bilayer. Residues 188–226 (AAARPGQSWNLINMTRSFLNACTSLWRNGETRFSLVGTS) are Cytoplasmic-facing. The chain crosses the membrane as a helical span at residues 227-247 (LFWGAGVTLRFLLVLWVPVAL). Over 248 to 256 (GITDNATPT) the chain is Periplasmic. The helical transmembrane segment at 257–277 (YLNAMVAIGIVVGAGAAAKLV) threads the bilayer. Residues 278 to 280 (TLE) lie on the Cytoplasmic side of the membrane. A helical transmembrane segment spans residues 281–301 (TVSRCMPAGILIGVVVLIFSL). Residues 302-304 (QHE) are Periplasmic-facing. Residues 305–325 (LLPAYALLMLIGVLGGFFVVP) traverse the membrane as a helical segment. Residues 326-343 (LNALLQERGKKSVGAGNA) are Cytoplasmic-facing. The helical transmembrane segment at 344–364 (IAVQNLGENSAMLLMLGIYSL) threads the bilayer. Topologically, residues 365 to 366 (AV) are periplasmic. The helical transmembrane segment at 367 to 387 (MVGIPVVPIGIGFGALFALAI) threads the bilayer. The Cytoplasmic segment spans residues 388–397 (TALWIWQRRY).

This sequence belongs to the major facilitator superfamily. LplT (TC 2.A.1.42) family.

The protein localises to the cell inner membrane. In terms of biological role, catalyzes the facilitated diffusion of 2-acyl-glycero-3-phosphoethanolamine (2-acyl-GPE) into the cell. The sequence is that of Lysophospholipid transporter LplT from Escherichia coli O127:H6 (strain E2348/69 / EPEC).